A 491-amino-acid polypeptide reads, in one-letter code: Probable cytosol aminopeptidase (491 aa).

Positions 261 and 266 each coordinate Mn(2+). Lysine 273 is an active-site residue. Mn(2+) contacts are provided by aspartate 285, aspartate 344, and glutamate 346. Arginine 348 is an active-site residue.

The protein belongs to the peptidase M17 family. Mn(2+) serves as cofactor.

It localises to the cytoplasm. The catalysed reaction is Release of an N-terminal amino acid, Xaa-|-Yaa-, in which Xaa is preferably Leu, but may be other amino acids including Pro although not Arg or Lys, and Yaa may be Pro. Amino acid amides and methyl esters are also readily hydrolyzed, but rates on arylamides are exceedingly low.. It catalyses the reaction Release of an N-terminal amino acid, preferentially leucine, but not glutamic or aspartic acids.. Presumably involved in the processing and regular turnover of intracellular proteins. Catalyzes the removal of unsubstituted N-terminal amino acids from various peptides. The protein is Probable cytosol aminopeptidase of Picosynechococcus sp. (strain ATCC 27264 / PCC 7002 / PR-6) (Agmenellum quadruplicatum).